The following is a 311-amino-acid chain: Malate dehydrogenase (311 aa).

Residues Gly-7 to Gly-13 and Asp-34 each bind NAD(+). Residues Arg-81 and Arg-87 each coordinate substrate. NAD(+) is bound by residues Asn-94 and Ile-117–Asn-119. Substrate is bound by residues Asn-119 and Arg-153. The active-site Proton acceptor is His-177. Met-227 contacts NAD(+).

It belongs to the LDH/MDH superfamily. MDH type 1 family. Homodimer.

It catalyses the reaction (S)-malate + NAD(+) = oxaloacetate + NADH + H(+). In terms of biological role, catalyzes the reversible oxidation of malate to oxaloacetate. In Aliivibrio fischeri (strain ATCC 700601 / ES114) (Vibrio fischeri), this protein is Malate dehydrogenase.